The chain runs to 310 residues: Homoserine kinase (310 aa).

Residue 91–101 coordinates ATP; sequence PIGSGLGSSAC.

The protein belongs to the GHMP kinase family. Homoserine kinase subfamily.

Its subcellular location is the cytoplasm. The enzyme catalyses L-homoserine + ATP = O-phospho-L-homoserine + ADP + H(+). Its pathway is amino-acid biosynthesis; L-threonine biosynthesis; L-threonine from L-aspartate: step 4/5. Its function is as follows. Catalyzes the ATP-dependent phosphorylation of L-homoserine to L-homoserine phosphate. The chain is Homoserine kinase from Escherichia coli O17:K52:H18 (strain UMN026 / ExPEC).